We begin with the raw amino-acid sequence, 659 residues long: Endoglucanase A (659 aa).

Positions 1 to 500 (MLIFETYLIL…SKLPNFPPKE (500 aa)) are catalytic. D101 (nucleophile) is an active-site residue. Positions 413 to 433 (NSPKHPHHRTAHGSWSNQLTN) are disordered. Active-site residues include H419, D457, and E466. Residues 501-658 (QVEDEFFVEA…GVLVFGTLPD (158 aa)) form the CBM3 domain.

Belongs to the glycosyl hydrolase 9 (cellulase E) family.

It localises to the secreted. It catalyses the reaction Endohydrolysis of (1-&gt;4)-beta-D-glucosidic linkages in cellulose, lichenin and cereal beta-D-glucans.. Its activity is regulated as follows. Strongly inhibited by ZnCl(2) and by EDTA. Its function is as follows. Active on carboxymethyl cellulose and carboxymethyl cellulose-RBB but not avicel, xanthan gum, carboxymethyl-curdulan-RBB or carboxymethyl-xylan-RBB. This Bacillus pumilus (Bacillus mesentericus) protein is Endoglucanase A (eglA).